Consider the following 543-residue polypeptide: Ribonuclease Y (543 aa).

The chain crosses the membrane as a helical span at residues 4–24 (IIMIPVATAIVSLLVGTVIGY). Positions 233–296 (TVSVVDLPNE…EIAKRAMERL (64 aa)) constitute a KH domain. An HD domain is found at 359–452 (VLSHSIEVGK…VVAADTISSA (94 aa)).

This sequence belongs to the RNase Y family.

It is found in the cell membrane. Functionally, endoribonuclease that initiates mRNA decay. The polypeptide is Ribonuclease Y (Lactobacillus helveticus (strain DPC 4571)).